We begin with the raw amino-acid sequence, 1027 residues long: Translation initiation factor IF-2 (1027 aa).

The interval 31–433 is disordered; the sequence is YVKSASSTVE…GGVRLPRGNG (403 aa). Residues 57-68 are compositionally biased toward gly residues; the sequence is KKGGGDSNGRAG. Pro residues predominate over residues 110–122; it reads GPKPGPKPGPKAP. The span at 123–145 shows a compositional bias: low complexity; the sequence is APETKPFEEAPAPAAKADAPAQP. Residues 148–171 are compositionally biased toward basic and acidic residues; sequence EQPRSEQPRSEQPRSEQPRSERSG. Composition is skewed to pro residues over residues 174–188 and 201–212; these read PGGP…PKPG and PPKPQSPKPGPR. A compositionally biased stretch (gly residues) spans 237–268; the sequence is PGGGQRQGGQGPGRGGPQGGRPDRQGGGGQGA. Residues 293 to 302 are compositionally biased toward pro residues; the sequence is GMMPPRPNPG. Residues 311–397 are compositionally biased toward gly residues; that stretch reads SGGGPGGGRG…GAAGAFGRPG (87 aa). Residues 401–410 are compositionally biased toward basic residues; the sequence is RRGRKSKRQK. One can recognise a tr-type G domain in the interval 523–695; that stretch reads SRPPVVTVMG…ILLTADATLD (173 aa). Residues 532 to 539 are G1; the sequence is GHVDHGKT. Position 532–539 (532–539) interacts with GTP; that stretch reads GHVDHGKT. The segment at 557–561 is G2; the sequence is GITQH. Positions 582–585 are G3; that stretch reads DTPG. Residues 582 to 586 and 636 to 639 contribute to the GTP site; these read DTPGH and NKID. The segment at 636–639 is G4; that stretch reads NKID. Positions 672 to 674 are G5; sequence SAR.

It belongs to the TRAFAC class translation factor GTPase superfamily. Classic translation factor GTPase family. IF-2 subfamily.

Its subcellular location is the cytoplasm. Its function is as follows. One of the essential components for the initiation of protein synthesis. Protects formylmethionyl-tRNA from spontaneous hydrolysis and promotes its binding to the 30S ribosomal subunits. Also involved in the hydrolysis of GTP during the formation of the 70S ribosomal complex. This Saccharopolyspora erythraea (strain ATCC 11635 / DSM 40517 / JCM 4748 / NBRC 13426 / NCIMB 8594 / NRRL 2338) protein is Translation initiation factor IF-2.